A 121-amino-acid chain; its full sequence is Large ribosomal subunit protein bL12 (121 aa).

This sequence belongs to the bacterial ribosomal protein bL12 family. In terms of assembly, homodimer. Part of the ribosomal stalk of the 50S ribosomal subunit. Forms a multimeric L10(L12)X complex, where L10 forms an elongated spine to which 2 to 4 L12 dimers bind in a sequential fashion. Binds GTP-bound translation factors.

Its function is as follows. Forms part of the ribosomal stalk which helps the ribosome interact with GTP-bound translation factors. Is thus essential for accurate translation. This chain is Large ribosomal subunit protein bL12, found in Enterobacter sp. (strain 638).